Here is a 707-residue protein sequence, read N- to C-terminus: MHHDNFRRLGNAAFAAAAALLAVACGGGDSSDGNTNPNIKPANIGTVTIQAYDGATDDLLTAGLGKDGLASATAPVPASPNSPTAAELRRYAIYTNYRAIVDTTAGGGFGSLYGPNVDAQGNVTTGQGKIAGVEYLAFSDDGSGQENVTMLVQIPNTFNQSKPCMITATSSGSRGVYGAIAVGEWGLKRGCAVAYTDKGTGAAPHDLDTDTVPLIDGTRTTRSAAGTNAQFAARPGILSLADFTAQVPHRLAFKHAHSQRNPEKDWGKFTLQAIEFGIWAINDRFGTVASNGVRQRTLAKSKIVVIASSVSNGGGAAVAAAEQDTDGLIDGVAVAEPNLNLPPNASILVKRGSKPVNASGRLLYDYITTANLLQLCASQATALVNAPAFATNQFYISRCQTLVDNKLISGTTVSDQAASALDQLHLAGWEPESDALHPSLSLFDTAASIAVTYANSYARASVTDRLCGYSFAATLADFKPAAIAPSVLASMFATGNGVPPTSTVQLINDRDLQHGPFMNGQSVSASNNRADANFDGAKCLRDLLTGTDSQAQALQSGVSQIQRSGNLHGKPALIVHGRSDGLLPVNHTSRPYLGFNRQQEGAASKLSYIEVENAQHFDAFIGAVSGYSNRYVPLHLYLIRALDAVYDNLTTGKALPPSQVVRTIPRGGATNTTTAPTLLPVNVPPISASPDAANQIAASTGSVDVPD.

The first 24 residues, 1–24, serve as a signal peptide directing secretion; that stretch reads MHHDNFRRLGNAAFAAAAALLAVA. Residue Ser311 is the Charge relay system of the active site.

The protein belongs to the D-(-)-3-hydroxybutyrate oligomer hydrolase family.

Its subcellular location is the secreted. It catalyses the reaction (3R)-hydroxybutanoate dimer + H2O = 2 (R)-3-hydroxybutanoate + H(+). Its pathway is lipid metabolism; butanoate metabolism. In terms of biological role, participates in the degradation of poly-3-hydroxybutyrate (PHB). It works downstream of poly(3-hydroxybutyrate) depolymerase, hydrolyzing D(-)-3-hydroxybutyrate oligomers of various length (3HB-oligomers) into 3HB-monomers. This chain is D-(-)-3-hydroxybutyrate oligomer hydrolase, found in Cupriavidus pinatubonensis (strain JMP 134 / LMG 1197) (Cupriavidus necator (strain JMP 134)).